A 1939-amino-acid polypeptide reads, in one-letter code: Myosin-2 (1939 aa).

The region spanning 33–82 is the Myosin N-terminal SH3-like domain; that stretch reads DAKTSVFVAEPKESFVKGTIQSREGGKVTVKTEAGATLTVKEDQVFPMNP. Phosphothreonine occurs at positions 64 and 69. A Myosin motor domain is found at 86 to 782; that stretch reads DKIEDMAMMT…LLGLLEEMRD (697 aa). Lysine 130 carries the N6,N6,N6-trimethyllysine modification. 179–186 provides a ligand contact to ATP; it reads GESGAGKT. Tyrosine 389 carries the phosphotyrosine modification. Serine 392 carries the phosphoserine modification. Threonine 419 carries the phosphothreonine modification. Serine 625 carries the phosphoserine modification. An actin-binding region spans residues 659–681; it reads LNKLMTNLRSTHPHFVRCIIPNE. At histidine 757 the chain carries Pros-methylhistidine. An actin-binding region spans residues 761–775; sequence KFGHTKVFFKAGLLG. The 30-residue stretch at 785-814 folds into the IQ domain; that stretch reads LAQLITRTQARCRGFLARVEYQKMVERRES. Residues 843 to 1939 adopt a coiled-coil conformation; the sequence is LLKSAESEKE…EVHTKVISEE (1097 aa). Residues serine 1092 and serine 1096 each carry the phosphoserine modification. 2 disordered regions span residues 1126 to 1147 and 1153 to 1172; these read IEAE…SREL and RLEE…KKRE. Over residues 1128 to 1147 the composition is skewed to basic and acidic residues; the sequence is AERASRAKAEKQRSDLSREL. 2 positions are modified to phosphoserine: serine 1162 and serine 1237. Phosphothreonine is present on threonine 1241. Position 1243 is a phosphoserine (serine 1243). Residue threonine 1255 is modified to Phosphothreonine. Serine 1261 is subject to Phosphoserine. Threonine 1286 carries the phosphothreonine modification. Phosphoserine occurs at positions 1288, 1292, 1303, and 1306. Residue tyrosine 1464 is modified to Phosphotyrosine. Residue threonine 1467 is modified to Phosphothreonine. Serine 1474 carries the post-translational modification Phosphoserine. Residue tyrosine 1492 is modified to Phosphotyrosine. Serine 1495 is subject to Phosphoserine. Residue threonine 1501 is modified to Phosphothreonine. At serine 1514 the chain carries Phosphoserine. At threonine 1517 the chain carries Phosphothreonine. A phosphoserine mark is found at serine 1542, serine 1554, serine 1574, serine 1600, serine 1603, serine 1714, and serine 1726. Threonine 1730 and threonine 1736 each carry phosphothreonine. Serine 1739 is subject to Phosphoserine. A disordered region spans residues 1885 to 1915; that stretch reads QAEEAEEQSNTNLSKFRKLQHELEEAEERAD.

This sequence belongs to the TRAFAC class myosin-kinesin ATPase superfamily. Myosin family. As to quaternary structure, muscle myosin is a hexameric protein that consists of 2 heavy chain subunits (MHC), 2 alkali light chain subunits (MLC) and 2 regulatory light chain subunits (MLC-2). Interacts with GCSAM.

It is found in the cytoplasm. It localises to the myofibril. Myosins are actin-based motor molecules with ATPase activity essential for muscle contraction. This is Myosin-2 (MYH2) from Sus scrofa (Pig).